We begin with the raw amino-acid sequence, 481 residues long: Replication factor C large subunit (481 aa).

Residue Gly43–Thr50 coordinates ATP. Composition is skewed to basic and acidic residues over residues Lys408 to Asp433 and Val441 to Ala457. Residues Lys408 to Phe481 are disordered. The segment covering Ala471–Phe481 has biased composition (polar residues).

The protein belongs to the activator 1 small subunits family. RfcL subfamily. In terms of assembly, heteromultimer composed of small subunits (RfcS) and large subunits (RfcL).

In terms of biological role, part of the RFC clamp loader complex which loads the PCNA sliding clamp onto DNA. The polypeptide is Replication factor C large subunit (Methanoregula boonei (strain DSM 21154 / JCM 14090 / 6A8)).